Consider the following 226-residue polypeptide: Ribose-5-phosphate isomerase A (226 aa).

Substrate is bound by residues 33-36 (TGST), 86-89 (DGAD), and 99-102 (KGGG). The active-site Proton acceptor is the Glu-108. Position 126 (Lys-126) interacts with substrate.

Belongs to the ribose 5-phosphate isomerase family. In terms of assembly, homodimer.

The enzyme catalyses aldehydo-D-ribose 5-phosphate = D-ribulose 5-phosphate. It participates in carbohydrate degradation; pentose phosphate pathway; D-ribose 5-phosphate from D-ribulose 5-phosphate (non-oxidative stage): step 1/1. Catalyzes the reversible conversion of ribose-5-phosphate to ribulose 5-phosphate. This Bordetella parapertussis (strain 12822 / ATCC BAA-587 / NCTC 13253) protein is Ribose-5-phosphate isomerase A.